The following is a 399-amino-acid chain: Succinyl-diaminopimelate desuccinylase (399 aa).

Zn(2+) is bound at residue His-80. Asp-82 is an active-site residue. Asp-113 is a Zn(2+) binding site. Glu-147 (proton acceptor) is an active-site residue. Zn(2+) is bound by residues Glu-148, Glu-176, and His-366.

The protein belongs to the peptidase M20A family. DapE subfamily. As to quaternary structure, homodimer. Requires Zn(2+) as cofactor. It depends on Co(2+) as a cofactor.

The enzyme catalyses N-succinyl-(2S,6S)-2,6-diaminopimelate + H2O = (2S,6S)-2,6-diaminopimelate + succinate. It functions in the pathway amino-acid biosynthesis; L-lysine biosynthesis via DAP pathway; LL-2,6-diaminopimelate from (S)-tetrahydrodipicolinate (succinylase route): step 3/3. Its function is as follows. Catalyzes the hydrolysis of N-succinyl-L,L-diaminopimelic acid (SDAP), forming succinate and LL-2,6-diaminopimelate (DAP), an intermediate involved in the bacterial biosynthesis of lysine and meso-diaminopimelic acid, an essential component of bacterial cell walls. The protein is Succinyl-diaminopimelate desuccinylase of Colwellia psychrerythraea (strain 34H / ATCC BAA-681) (Vibrio psychroerythus).